Consider the following 492-residue polypeptide: Catalase isozyme 2 (492 aa).

Residues His-65 and Asn-138 contribute to the active site. Tyr-348 provides a ligand contact to heme.

It belongs to the catalase family. As to quaternary structure, homotetramer. Heme serves as cofactor.

The protein resides in the peroxisome. The protein localises to the glyoxysome. It carries out the reaction 2 H2O2 = O2 + 2 H2O. Its function is as follows. Occurs in almost all aerobically respiring organisms and serves to protect cells from the toxic effects of hydrogen peroxide. This is Catalase isozyme 2 (CAT2) from Solanum tuberosum (Potato).